We begin with the raw amino-acid sequence, 227 residues long: General transcription factor 3C polypeptide 6 (227 aa).

The disordered stretch occupies residues 157 to 227; the sequence is DEAAGPASDK…DGNVSQNNQS (71 aa). Positions 186–195 are enriched in basic and acidic residues; it reads EQEKVEHSEV. Residues 203–227 show a composition bias toward polar residues; it reads ETPSEMESSVFMGTQDGNVSQNNQS.

Belongs to the TFIIIC subunit 6 family. In terms of assembly, part of the TFIIIC subcomplex TFIIIC2, consisting of six subunits, GTF3C1, GTF3C2, GTF3C3, GTF3C4, GTF3C5 and GTF3C6. Interacts with GTF3C4 and GTF3C5.

It localises to the nucleus. Functionally, involved in RNA polymerase III-mediated transcription. Integral, tightly associated component of the DNA-binding TFIIIC2 subcomplex that directly binds tRNA and virus-associated RNA promoters. This chain is General transcription factor 3C polypeptide 6, found in Mus musculus (Mouse).